The following is a 424-amino-acid chain: Acetyl-CoA acetyltransferase, mitochondrial (424 aa).

Residues 1–30 (MAALAVLHGVVRRPLLRGLLQEVRCLGRSY) constitute a mitochondrion transit peptide. At Lys-63 the chain carries N6-acetyllysine; alternate. Lys-63 is modified (N6-succinyllysine; alternate). Position 75 is an N6-succinyllysine (Lys-75). Cys-123 (acyl-thioester intermediate) is an active-site residue. An N6-acetyllysine; alternate mark is found at Lys-171, Lys-178, Lys-187, and Lys-199. Residues Lys-171, Lys-178, Lys-187, and Lys-199 each carry the N6-succinyllysine; alternate modification. Ser-204 carries the phosphoserine modification. Tyr-216 contributes to the CoA binding site. Tyr-216 lines the K(+) pocket. N6-acetyllysine; alternate is present on residues Lys-220 and Lys-227. Residues Lys-220 and Lys-227 each carry the N6-succinyllysine; alternate modification. An N6-succinyllysine modification is found at Lys-240. Lys-242 is modified (N6-acetyllysine; alternate). Lys-242 is subject to N6-succinyllysine; alternate. Residues Lys-248 and Lys-254 each carry the N6-acetyllysine modification. CoA-binding positions include 255–257 (RVD) and Lys-260. Lys-260 carries the post-translational modification N6-acetyllysine; alternate. At Lys-260 the chain carries N6-succinyllysine; alternate. N6-succinyllysine occurs at positions 263 and 265. Lys-270 is subject to N6-acetyllysine. Positions 277, 278, and 280 each coordinate K(+). Ser-281 contacts CoA. Lys-335 is modified (N6-acetyllysine). Val-378 contacts K(+). The active-site Proton donor/acceptor is the Cys-410.

It belongs to the thiolase-like superfamily. Thiolase family. In terms of assembly, homotetramer. Succinylation at Lys-265, adjacent to a coenzyme A binding site. Desuccinylated by SIRT5.

The protein resides in the mitochondrion. It carries out the reaction 2 acetyl-CoA = acetoacetyl-CoA + CoA. The catalysed reaction is propanoyl-CoA + acetyl-CoA = 2-methyl-3-oxobutanoyl-CoA + CoA. It participates in lipid metabolism; fatty acid beta-oxidation. With respect to regulation, activated by potassium ions, but not sodium ions. Its function is as follows. This is one of the enzymes that catalyzes the last step of the mitochondrial beta-oxidation pathway, an aerobic process breaking down fatty acids into acetyl-CoA. Using free coenzyme A/CoA, catalyzes the thiolytic cleavage of medium- to long-chain 3-oxoacyl-CoAs into acetyl-CoA and a fatty acyl-CoA shortened by two carbon atoms. The activity of the enzyme is reversible and it can also catalyze the condensation of two acetyl-CoA molecules into acetoacetyl-CoA. Thereby, it plays a major role in ketone body metabolism. This Rattus norvegicus (Rat) protein is Acetyl-CoA acetyltransferase, mitochondrial (Acat1).